Consider the following 353-residue polypeptide: Mas-related G-protein coupled receptor member B5 (353 aa).

Residues 1–67 (MPDSPTESYG…SCIITFNTLN (67 aa)) lie on the Extracellular side of the membrane. Residues Asn26 and Asn44 are each glycosylated (N-linked (GlcNAc...) asparagine). A helical transmembrane segment spans residues 68–90 (FLTATISVVGTAGNATVLRLLGF). The Cytoplasmic portion of the chain corresponds to 91 to 96 (HMHRYA). A helical membrane pass occupies residues 97–117 (FSVYVFNLAGADFLYLCTQTV). The Extracellular portion of the chain corresponds to 118–131 (YSLECVLQFDNSYF). A helical transmembrane segment spans residues 132-152 (YFLLTILMFAYLAALCMIPAI). At 153-180 (STERCLSVTWPIWYHCQRPRHTSATVCA) the chain is on the cytoplasmic side. A helical membrane pass occupies residues 181-201 (LFWAFSLLLRLLLGQGCGFLF). Residues 202–213 (GKYDYYFCRYCS) are Extracellular-facing. The chain crosses the membrane as a helical span at residues 214–234 (FITTAFLIVLFVVPFVSSLAM). The Cytoplasmic portion of the chain corresponds to 235-253 (LTKIICGSHRIPVTRFYVT). A helical transmembrane segment spans residues 254–274 (IAVTVLVFTFFGLPVGIISLL). Topologically, residues 275 to 289 (LPRIVVFRGVFYIYK) are extracellular. A helical membrane pass occupies residues 290–310 (IVTFLYSVNCCANPIIYFLIG). Over 311-353 (SIRHHRLQRQSLKLLLQRAMQDTPEEEGGVKGPSQKSNELEIV) the chain is Cytoplasmic. Positions 333–353 (TPEEEGGVKGPSQKSNELEIV) are disordered.

It belongs to the G-protein coupled receptor 1 family. Mas subfamily. Expressed strongly in newborn dorsal root ganglia, adult dorsal root ganglia and trigeminal ganlia.

The protein resides in the membrane. Functionally, orphan receptor. Probably involved in the function of nociceptive neurons. May regulate nociceptor function and/or development, including the sensation or modulation of pain. The polypeptide is Mas-related G-protein coupled receptor member B5 (Mrgprb5) (Rattus norvegicus (Rat)).